Consider the following 68-residue polypeptide: Lividin-1 (68 aa).

The N-terminal stretch at 1-22 is a signal peptide; the sequence is MFTLKKSLLLLFFLGTINLSLC. The propeptide occupies 23-42; the sequence is QEERNADEEERRDERNVEVE. A disulfide bond links Cys62 and Cys68.

Expressed by the skin glands.

It localises to the secreted. Functionally, antimicrobial peptide. The sequence is that of Lividin-1 from Odorrana livida (Green mountain frog).